The sequence spans 348 residues: Protein RecA (348 aa).

ATP is bound at residue 65-72 (GPESSGKT).

Belongs to the RecA family.

The protein localises to the cytoplasm. Can catalyze the hydrolysis of ATP in the presence of single-stranded DNA, the ATP-dependent uptake of single-stranded DNA by duplex DNA, and the ATP-dependent hybridization of homologous single-stranded DNAs. It interacts with LexA causing its activation and leading to its autocatalytic cleavage. This Enterococcus faecalis (strain ATCC 700802 / V583) protein is Protein RecA.